A 195-amino-acid chain; its full sequence is Archaetidylinositol phosphate synthase (195 aa).

A run of 2 helical transmembrane segments spans residues 27–47 (IALP…AASA) and 54–74 (LITG…DGAV). Mg(2+) contacts are provided by Asp68, Asp71, Asp89, and Asp93. Asp93 acts as the Proton acceptor in catalysis. Helical transmembrane passes span 99 to 119 (IIII…LLAL) and 158 to 178 (LAGY…LAAL).

Belongs to the CDP-alcohol phosphatidyltransferase class-I family. It depends on Mn(2+) as a cofactor. Mg(2+) serves as cofactor.

It localises to the cell membrane. The catalysed reaction is CDP-2,3-bis-O-(phytanyl)-sn-glycerol + 1D-myo-inositol 3-phosphate = saturated 1-archaetidyl-1D-myo-inositol 3-phosphate + CMP + H(+). The protein operates within lipid metabolism; phospholipid metabolism. In terms of biological role, catalyzes the formation of archaetidylinositol phosphate (AIP) from CDP-archaeol (CDP-ArOH or CDP-2,3-bis-(O-phytanyl)-sn-glycerol) and 1L-myo-inositol 1-phosphate (IP or 1D-myo-inositol 3-phosphate). AIP is a precursor of archaetidyl-myo-inositol (AI), an ether-type inositol phospholipid ubiquitously distributed in archaea membranes and essential for glycolipid biosynthesis in archaea. The polypeptide is Archaetidylinositol phosphate synthase (Methanothermobacter thermautotrophicus (strain ATCC 29096 / DSM 1053 / JCM 10044 / NBRC 100330 / Delta H) (Methanobacterium thermoautotrophicum)).